The sequence spans 613 residues: Thioredoxin reductase 1, cytoplasmic (613 aa).

Positions 58–121 (AVLPASRPSK…LPTMNGSKDP (64 aa)) are disordered. Polar residues predominate over residues 65–74 (PSKTLPSSSQ). FAD-binding positions include 136-137 (SG), 156-157 (DF), 172-173 (TC), and 177-181 (GCIPK). C173 and C178 are oxidised to a cystine. K182 carries the post-translational modification N6-succinyllysine. A Phosphotyrosine modification is found at Y245. FAD is bound by residues 245-246 (YG) and T275. NADP(+) is bound by residues R280, 312 to 318 (ASYVALE), 335 to 336 (RS), R340, 340 to 342 (RGF), 406 to 407 (GR), and K429. FAD is bound at residue Y314. FAD-binding positions include D448, 455–457 (ELT), and H586. Residue E455 coordinates NADP(+). Catalysis depends on H586, which acts as the Proton acceptor. Positions 611 to 612 (CU) form a cross-link, cysteinyl-selenocysteine (Cys-Sec). A non-standard amino acid (selenocysteine) is located at residue U612.

The protein belongs to the class-I pyridine nucleotide-disulfide oxidoreductase family. In terms of assembly, homodimer. It depends on FAD as a cofactor. Post-translationally, ISGylated.

It localises to the cytoplasm. The catalysed reaction is [thioredoxin]-dithiol + NADP(+) = [thioredoxin]-disulfide + NADPH + H(+). It catalyses the reaction H2O2 + NADPH + H(+) = NADP(+) + 2 H2O. Its function is as follows. Reduces disulfideprotein thioredoxin (Trx) to its dithiol-containing form. Homodimeric flavoprotein involved in the regulation of cellular redox reactions, growth and differentiation. Contains a selenocysteine residue at the C-terminal active site that is essential for catalysis. Also has reductase activity on hydrogen peroxide (H2O2). The polypeptide is Thioredoxin reductase 1, cytoplasmic (Mus musculus (Mouse)).